Here is a 104-residue protein sequence, read N- to C-terminus: UPF0213 protein PA3854 (104 aa).

Residues 13-88 enclose the GIY-YIG domain; the sequence is KCWSVYLVRA…KALSKRAKER (76 aa).

It belongs to the UPF0213 family.

The polypeptide is UPF0213 protein PA3854 (Pseudomonas aeruginosa (strain ATCC 15692 / DSM 22644 / CIP 104116 / JCM 14847 / LMG 12228 / 1C / PRS 101 / PAO1)).